Here is a 504-residue protein sequence, read N- to C-terminus: uncharacterized protein (504 aa).

A helical membrane pass occupies residues 26 to 46 (ILFLLLGLIILVNISINVTTV). A compositionally biased stretch (polar residues) spans 103–112 (PTQCSSSSTH). Disordered stretches follow at residues 103–180 (PTQC…TRPM), 313–402 (YDAR…PLTT), and 431–504 (QRLA…GKLN). A compositionally biased stretch (basic residues) spans 113 to 128 (YFRKHSNDRRSRRRYC). A compositionally biased stretch (polar residues) spans 135–147 (QIRQSNQQQSCHS). A compositionally biased stretch (basic and acidic residues) spans 313 to 324 (YDARDQWRRGTE). Over residues 349–377 (SSQAHRQNFPSYTHSQPNHSPPQSVGYSS) the composition is skewed to polar residues. Basic and acidic residues-rich tracts occupy residues 378–389 (RESHEVRRRAPD) and 467–478 (LELKRQVQENRG). Residues 494–504 (SLHRSRTGKLN) are compositionally biased toward basic residues.

The protein localises to the membrane. This is an uncharacterized protein from Rattus norvegicus (Rat).